The primary structure comprises 72 residues: Translation initiation factor IF-1 (72 aa).

In terms of domain architecture, S1-like spans 1 to 72; it reads MAKEDCIEMQ…SKARIIFRAR (72 aa).

The protein belongs to the IF-1 family. Component of the 30S ribosomal translation pre-initiation complex which assembles on the 30S ribosome in the order IF-2 and IF-3, IF-1 and N-formylmethionyl-tRNA(fMet); mRNA recruitment can occur at any time during PIC assembly.

The protein resides in the cytoplasm. Functionally, one of the essential components for the initiation of protein synthesis. Stabilizes the binding of IF-2 and IF-3 on the 30S subunit to which N-formylmethionyl-tRNA(fMet) subsequently binds. Helps modulate mRNA selection, yielding the 30S pre-initiation complex (PIC). Upon addition of the 50S ribosomal subunit IF-1, IF-2 and IF-3 are released leaving the mature 70S translation initiation complex. This chain is Translation initiation factor IF-1, found in Haemophilus ducreyi (strain 35000HP / ATCC 700724).